We begin with the raw amino-acid sequence, 237 residues long: RING finger protein vilya (237 aa).

An RING-type zinc finger spans residues 21–69 (CNSCCALFCDKKHTFFLLACHHVFCERCVKVSAGRTPSDAPIFECSTCR). Residues 172-237 (MHRMAQAYRS…IHPPNNSFDL (66 aa)) form a disordered region. Residues 180–195 (RSRSLTSQSSSSAQRS) are compositionally biased toward low complexity. A compositionally biased stretch (polar residues) spans 221 to 237 (RQQITSFIHPPNNSFDL).

May interact with itself and with narya and nenya through their RING-type zinc fingers. As to expression, expressed in nurse cell and pro-oocytes (at protein level).

It is found in the chromosome. In terms of biological role, required for the formation of DNA double-strand breaks during meiosis together with narya and nenya. In Drosophila melanogaster (Fruit fly), this protein is RING finger protein vilya.